Here is a 295-residue protein sequence, read N- to C-terminus: Bifunctional protein FolD (295 aa).

NADP(+)-binding positions include 172–174 (GRS), S197, and I238.

This sequence belongs to the tetrahydrofolate dehydrogenase/cyclohydrolase family. As to quaternary structure, homodimer.

It carries out the reaction (6R)-5,10-methylene-5,6,7,8-tetrahydrofolate + NADP(+) = (6R)-5,10-methenyltetrahydrofolate + NADPH. The enzyme catalyses (6R)-5,10-methenyltetrahydrofolate + H2O = (6R)-10-formyltetrahydrofolate + H(+). It functions in the pathway one-carbon metabolism; tetrahydrofolate interconversion. Functionally, catalyzes the oxidation of 5,10-methylenetetrahydrofolate to 5,10-methenyltetrahydrofolate and then the hydrolysis of 5,10-methenyltetrahydrofolate to 10-formyltetrahydrofolate. The polypeptide is Bifunctional protein FolD (Rickettsia akari (strain Hartford)).